Consider the following 459-residue polypeptide: Beta-glucosidase (459 aa).

Catalysis depends on Glu171, which acts as the Proton donor. Catalysis depends on Glu359, which acts as the Nucleophile.

Belongs to the glycosyl hydrolase 1 family.

The catalysed reaction is Hydrolysis of terminal, non-reducing beta-D-glucosyl residues with release of beta-D-glucose.. This Agrobacterium sp. (strain ATCC 21400) protein is Beta-glucosidase (abg).